The chain runs to 347 residues: Eukaryotic translation initiation factor 3 subunit I (347 aa).

WD repeat units lie at residues 8-47 (GHER…RLGT), 50-89 (GHTG…CVAT), 149-190 (THEG…EYVD), 194-233 (LHEK…VLKK), and 291-330 (GHFG…FDFK). Residue Ser302 is modified to Phosphoserine.

Belongs to the eIF-3 subunit I family. Component of the eukaryotic translation initiation factor 3 (eIF-3) complex.

The protein resides in the cytoplasm. Functionally, component of the eukaryotic translation initiation factor 3 (eIF-3) complex, which is involved in protein synthesis of a specialized repertoire of mRNAs and, together with other initiation factors, stimulates binding of mRNA and methionyl-tRNAi to the 40S ribosome. The eIF-3 complex specifically targets and initiates translation of a subset of mRNAs involved in cell proliferation. In Saccharomyces cerevisiae (strain YJM789) (Baker's yeast), this protein is Eukaryotic translation initiation factor 3 subunit I.